A 215-amino-acid polypeptide reads, in one-letter code: uncharacterized protein (215 aa).

S-adenosyl-L-methionine-binding residues include Gly53, Glu74, and Asp97.

This sequence belongs to the methyltransferase superfamily. YrrT family.

Functionally, could be a S-adenosyl-L-methionine-dependent methyltransferase. This is an uncharacterized protein from Geobacillus kaustophilus (strain HTA426).